Here is a 587-residue protein sequence, read N- to C-terminus: MDPILQELVDEWFKLDQDETTRNEVSQLIKAEDYATLKQIMHPRIGFGTSGLRAEIGAGFARMNCLTVIQASQGFAEYLLQTVPSAAKLGVVIGHDHRHKSNTFARLTAAVFLQKGFKTYFFDHLVHTPLVPFAVKTLGTAAGVMITASHNPAAYNGYKVYWGNGCAIIPPHDKGIAACIEKNLTPITWDKNLVENHKLADRDFAVGLLKNYWSQLHEFHSENNFSLEMKSLKFVYTPIHGVGLPFVTSALHLFGEQGDMISVPLQDSPNPDFPTVKFPNPEEEGALDLAYEQADANGISYVLATDPDADRFAFAEKINGAWRRFTGDEVGCILAYFIFQEYKNVGKPIDDFYVLSTTVSSAMVKSMAKVEGFHHVETLTGFKWLGNKALELEKQGKFIGLAYEEALGYMVGSIVRDKDGVNALITFLHLLKRLQLQNLSITEVFEQMSKKYGYYTTQNSYFLSRDTPKLRALVDALRHYDTKSGYPATLGSKKITNVRDLTTGYDSSSTDGKATLPVSKSSDNVTFELENGEVIMTIRTSGTEPKLKFYICARGHSLEDSIKNATEVKQAIKSEWFHPQQNGLEEP.

Substrate-binding positions include Thr49, Arg53, and 149–150; that span reads SH. Ser149 acts as the Phosphoserine intermediate in catalysis. Mg(2+)-binding residues include Ser149, Asp306, Asp308, and Asp310. Position 149 is a phosphoserine (Ser149). Substrate is bound by residues 310–311, Thr380, 404–406, and Lys418; these read DR and EEA.

It belongs to the phosphohexose mutase family. It depends on Mg(2+) as a cofactor.

It is found in the cytoplasm. The protein localises to the nucleus. It catalyses the reaction alpha-D-ribose 1-phosphate = D-ribose 5-phosphate. Functionally, converts ribose 1-phosphate to ribose 5-phosphate. Involved in ribose salvage via the pentose phosphate pathway. The polypeptide is Probable phosphoribomutase (Schizosaccharomyces pombe (strain 972 / ATCC 24843) (Fission yeast)).